Consider the following 393-residue polypeptide: S-adenosylmethionine synthase 2 (393 aa).

Glu-9 is a Mg(2+) binding site. Position 15 (His-15) interacts with ATP. Residue Glu-43 coordinates K(+). Glu-56 and Gln-99 together coordinate L-methionine. ATP is bound by residues 167–169, 235–238, Asp-246, 252–253, Ala-269, Lys-273, and Lys-277; these read DGK, SGRF, and RK. Asp-246 lines the L-methionine pocket. Lys-277 contributes to the L-methionine binding site.

Belongs to the AdoMet synthase family. Homotetramer. Requires Mn(2+) as cofactor. Mg(2+) is required as a cofactor. It depends on Co(2+) as a cofactor. The cofactor is K(+). Mostly expressed in flowers, seedpods and roots, and, to a lower extent, in stems and leaves.

The protein resides in the cytoplasm. The enzyme catalyses L-methionine + ATP + H2O = S-adenosyl-L-methionine + phosphate + diphosphate. Its pathway is amino-acid biosynthesis; S-adenosyl-L-methionine biosynthesis; S-adenosyl-L-methionine from L-methionine: step 1/1. Its function is as follows. Catalyzes the formation of S-adenosylmethionine from methionine and ATP. The reaction comprises two steps that are both catalyzed by the same enzyme: formation of S-adenosylmethionine (AdoMet) and triphosphate, and subsequent hydrolysis of the triphosphate. The polypeptide is S-adenosylmethionine synthase 2 (MSAMS2) (Brassica juncea (Indian mustard)).